A 278-amino-acid polypeptide reads, in one-letter code: Undecaprenyl-diphosphatase 2 (278 aa).

The next 7 helical transmembrane spans lie at methionine 1–isoleucine 21, phenylalanine 38–tyrosine 58, phenylalanine 85–leucine 105, phenylalanine 118–valine 138, serine 191–leucine 211, proline 223–isoleucine 243, and leucine 251–histidine 271.

This sequence belongs to the UppP family.

It is found in the cell membrane. The catalysed reaction is di-trans,octa-cis-undecaprenyl diphosphate + H2O = di-trans,octa-cis-undecaprenyl phosphate + phosphate + H(+). In terms of biological role, catalyzes the dephosphorylation of undecaprenyl diphosphate (UPP). Confers resistance to bacitracin. The polypeptide is Undecaprenyl-diphosphatase 2 (Halalkalibacterium halodurans (strain ATCC BAA-125 / DSM 18197 / FERM 7344 / JCM 9153 / C-125) (Bacillus halodurans)).